We begin with the raw amino-acid sequence, 312 residues long: Ribonuclease HIII (312 aa).

The 217-residue stretch at 95-311 (FNCIGSDEAG…REKAQKILKP (217 aa)) folds into the RNase H type-2 domain. Residues Asp101, Glu102, and Asp206 each coordinate a divalent metal cation.

Belongs to the RNase HII family. RnhC subfamily. Mn(2+) is required as a cofactor. The cofactor is Mg(2+).

The protein localises to the cytoplasm. The enzyme catalyses Endonucleolytic cleavage to 5'-phosphomonoester.. Functionally, endonuclease that specifically degrades the RNA of RNA-DNA hybrids. The chain is Ribonuclease HIII from Staphylococcus aureus (strain MW2).